The primary structure comprises 238 residues: Uridylate kinase (238 aa).

12-15 (KLSG) contacts ATP. Gly54 provides a ligand contact to UMP. ATP-binding residues include Gly55 and Arg59. UMP is bound by residues Asp74 and 135–142 (TGNPFFTT). ATP-binding residues include Thr162, Asn163, Tyr168, and Asp171.

Belongs to the UMP kinase family. In terms of assembly, homohexamer.

The protein resides in the cytoplasm. The enzyme catalyses UMP + ATP = UDP + ADP. It participates in pyrimidine metabolism; CTP biosynthesis via de novo pathway; UDP from UMP (UMPK route): step 1/1. With respect to regulation, inhibited by UTP. Its function is as follows. Catalyzes the reversible phosphorylation of UMP to UDP. The sequence is that of Uridylate kinase from Rhodopseudomonas palustris (strain BisB18).